The sequence spans 328 residues: MQGSVTEFLKPRLVDIEQISSTHAKVILEPLERGFGHTLGNALRRILLSSMPGCAVTEVEIDGVLHEYSSKEGVQEDILEVLLNLKGLAVKVQNKDDVILTLNKSGIGPVVAADITYDGDVEIVNPDHVICHLTDENASISMRIRVQRGRGYVPASSRTHTQEERPIGRLLVDACYSPVERIAYNVEAARVEQRTDLDKLVIELETNGALEPEEAIRRAATILAEQLDAFVDLRDVRQPEIKEEKPEFXPILLRPVDDLELTVRSANCLKAETIHYIGDLVQRTEVELLKTPNLGKKSLTEIKDVLASRGLSLGMRLENWPPASIAED.

The alpha N-terminal domain (alpha-NTD) stretch occupies residues 1–234; sequence MQGSVTEFLK…EQLDAFVDLR (234 aa). The alpha C-terminal domain (alpha-CTD) stretch occupies residues 248-328; that stretch reads FXPILLRPVD…NWPPASIAED (81 aa).

This sequence belongs to the RNA polymerase alpha chain family. As to quaternary structure, homodimer. The RNAP catalytic core consists of 2 alpha, 1 beta, 1 beta' and 1 omega subunit. When a sigma factor is associated with the core the holoenzyme is formed, which can initiate transcription.

The enzyme catalyses RNA(n) + a ribonucleoside 5'-triphosphate = RNA(n+1) + diphosphate. In terms of biological role, DNA-dependent RNA polymerase catalyzes the transcription of DNA into RNA using the four ribonucleoside triphosphates as substrates. The polypeptide is DNA-directed RNA polymerase subunit alpha (Haemophilus influenzae (strain ATCC 51907 / DSM 11121 / KW20 / Rd)).